The chain runs to 947 residues: DNA mismatch repair protein MutS 2 (947 aa).

The interval 623–643 (IPNDTHLGSGPVPASRDGSDD) is disordered. Residue 659–666 (GPNMSGKS) participates in ATP binding. Residues 841 to 916 (AETADTGVEA…GAAAEDELPE (76 aa)) are disordered.

This sequence belongs to the DNA mismatch repair MutS family.

This protein is involved in the repair of mismatches in DNA. It is possible that it carries out the mismatch recognition step. This protein has a weak ATPase activity. This chain is DNA mismatch repair protein MutS 2, found in Haloarcula marismortui (strain ATCC 43049 / DSM 3752 / JCM 8966 / VKM B-1809) (Halobacterium marismortui).